Here is a 516-residue protein sequence, read N- to C-terminus: Effector protein hopAB1 (516 aa).

Disordered stretches follow at residues 1–93 (MSGI…AQPA) and 175–259 (RALA…DEAL). The span at 16–30 (WRADDEPVTERERDS) shows a compositional bias: basic and acidic residues. Residues 31–41 (SSGANLTNSPQ) are compositionally biased toward polar residues. The span at 81–90 (PVEPRQPPEA) shows a compositional bias: pro residues. Composition is skewed to low complexity over residues 183–196 (PAPSRPVASSSRSS) and 212–224 (QTSSSSQATSSTS).

Belongs to the HopAB family.

It localises to the secreted. Its function is as follows. Effector protein that plays different roles depending on the species and plant cultivars that interact with the pathogen. Acts as a virulence determinant by enhancing the development of disease symptoms and bacterial growth. Acts as an avirulence factor by eliciting hypersensitive response (HR) and plant resistance. The polypeptide is Effector protein hopAB1 (hopAB1) (Pseudomonas syringae pv. syringae (strain B728a)).